Here is a 242-residue protein sequence, read N- to C-terminus: 1-(5-phosphoribosyl)-5-[(5-phosphoribosylamino)methylideneamino] imidazole-4-carboxamide isomerase (242 aa).

D7 serves as the catalytic Proton acceptor. The active-site Proton donor is the D129.

The protein belongs to the HisA/HisF family.

The protein localises to the cytoplasm. It catalyses the reaction 1-(5-phospho-beta-D-ribosyl)-5-[(5-phospho-beta-D-ribosylamino)methylideneamino]imidazole-4-carboxamide = 5-[(5-phospho-1-deoxy-D-ribulos-1-ylimino)methylamino]-1-(5-phospho-beta-D-ribosyl)imidazole-4-carboxamide. It participates in amino-acid biosynthesis; L-histidine biosynthesis; L-histidine from 5-phospho-alpha-D-ribose 1-diphosphate: step 4/9. This Pseudoalteromonas translucida (strain TAC 125) protein is 1-(5-phosphoribosyl)-5-[(5-phosphoribosylamino)methylideneamino] imidazole-4-carboxamide isomerase.